The primary structure comprises 377 residues: Succinyl-diaminopimelate desuccinylase (377 aa).

Residue histidine 68 participates in Zn(2+) binding. Aspartate 70 is a catalytic residue. Aspartate 101 contributes to the Zn(2+) binding site. Glutamate 135 (proton acceptor) is an active-site residue. Residues glutamate 136, glutamate 164, and histidine 350 each contribute to the Zn(2+) site.

The protein belongs to the peptidase M20A family. DapE subfamily. Homodimer. It depends on Zn(2+) as a cofactor. The cofactor is Co(2+).

It carries out the reaction N-succinyl-(2S,6S)-2,6-diaminopimelate + H2O = (2S,6S)-2,6-diaminopimelate + succinate. Its pathway is amino-acid biosynthesis; L-lysine biosynthesis via DAP pathway; LL-2,6-diaminopimelate from (S)-tetrahydrodipicolinate (succinylase route): step 3/3. Its function is as follows. Catalyzes the hydrolysis of N-succinyl-L,L-diaminopimelic acid (SDAP), forming succinate and LL-2,6-diaminopimelate (DAP), an intermediate involved in the bacterial biosynthesis of lysine and meso-diaminopimelic acid, an essential component of bacterial cell walls. The polypeptide is Succinyl-diaminopimelate desuccinylase (Aliivibrio fischeri (strain ATCC 700601 / ES114) (Vibrio fischeri)).